The sequence spans 424 residues: MIKMPRGTQDILPQDSAKWRYIENRLHTLMELYNYKEIRTPIFESTELFARGVGDSTDVVQKEMYTFKDKGDRSLTLRPEGTAAVVRSYIEHKMQGEPNQPIKLYYNGPMFRYERKQKGRYRQFNQFGVEAIGAENPSIDAEILAMVMHIYESFGLKHLKLVINSIGDSESRKEYNEALVKHFEPVIDTFCSDCQSRLHTNPMRILDCKIDRDKEAVKNAPRITDYLNNDSKSYYEQVKLHLDNLNISYVEDPNLVRGLDYYTHTAFELMIDNPEYDGAITTLCGGGRYNGLLQLLDGPDETGIGFALSIERLLMALDEEGISLDVSEDFDLFVVTMGEDADRYAVKLINDLRRNGIKVDKDYLNRKIKGQMKQADRLNAKYTVVIGDQELENNEIGVKNMISGESENVQLDELVNYFKSRKEV.

Belongs to the class-II aminoacyl-tRNA synthetase family. In terms of assembly, homodimer.

It is found in the cytoplasm. It catalyses the reaction tRNA(His) + L-histidine + ATP = L-histidyl-tRNA(His) + AMP + diphosphate + H(+). The polypeptide is Histidine--tRNA ligase (Staphylococcus epidermidis (strain ATCC 12228 / FDA PCI 1200)).